An 828-amino-acid polypeptide reads, in one-letter code: MKLSRRSFMKANAVAAAAAAAGLSVPGVARAVVGQQEAIKWDKAPCRFCGTGCGVLVGTQQGRVVACQGDPDAPVNRGLNCIKGYFLPKIMYGKDRLTQPLLRMKNGKYDKEGEFTPITWDQAFDVMEEKFKTALKEKGPESIGMFGSGQWTIWEGYAASKLFKAGFRSNNIDPNARHCMASAVVGFMRTFGMDEPMGCYDDIEQADAFVLWGANMAEMHPILWSRITNRRLSNQNVTVAVLSTYQHRSFELADNGIIFTPQSDLVILNYIANYIIQNNAINQDFFSKHVNLRKGATDIGYGLRPTHPLEKAAKNPGSDASEPMSFEDYKAFVAEYTLEKTAEMTGVPKDQLEQLAQLYADPNKKVISYWTMGFNQHTRGVWANNLVYNLHLLTGKISQPGCGPFSLTGQPSACGTAREVGTFAHRLPADMVVTNEKHRDICEKKWNIPGGTIPAKIGLHAVAQDRALKDGKLNVYWTMCTNNMQAGPNINEERMPGWRDPRNFIIVSDPYPTVSALAADLILPTAMWVEKEGAYGNAERRTQFWRQQVQAPGEAKSDLWQLVQFSRRFKTEEVWPEELLAKKPELRGKTLYEVLYATPEVSKFPVSELAEDQLNDESRELGFYLQKGLFEEYAWFGRGHGHDLAPFDDYHKARGLRWPVVNGKETQWRYSEGNDPYVKAGEGYKFYGKPDGKAVIFALPFEPAAEAPDEEYDLWLSTGRVLEHWHTGSMTRRVPELHRAFPEAVLFIHPLDAKARDLRRGDKVKVVSRRGEVISIVETRGRNRPPQGLVYMPFFDAAQLVNKLTLDATDPLSKETDFKKCAVKLEKV.

The tat-type signal signal peptide spans 1–31 (MKLSRRSFMKANAVAAAAAAAGLSVPGVARA). The 4Fe-4S Mo/W bis-MGD-type domain maps to 39-95 (IKWDKAPCRFCGTGCGVLVGTQQGRVVACQGDPDAPVNRGLNCIKGYFLPKIMYGKD). [4Fe-4S] cluster contacts are provided by Cys46, Cys49, Cys53, and Cys81. Residues Lys83, Gln150, Asn175, Cys179, 212-219 (WGANMAEM), 243-247 (STYQH), 262-264 (QSD), Met372, Gln376, Asn482, 508-509 (SD), Lys531, Asp558, and 718-727 (TGRVLEHWHT) contribute to the Mo-bis(molybdopterin guanine dinucleotide) site. Residue Phe794 coordinates substrate. Mo-bis(molybdopterin guanine dinucleotide) contacts are provided by Asn802 and Lys819.

It belongs to the prokaryotic molybdopterin-containing oxidoreductase family. NasA/NapA/NarB subfamily. In terms of assembly, component of the periplasmic nitrate reductase NapAB complex composed of NapA and NapB. The cofactor is [4Fe-4S] cluster. Mo-bis(molybdopterin guanine dinucleotide) serves as cofactor. Predicted to be exported by the Tat system. The position of the signal peptide cleavage has not been experimentally proven.

Its subcellular location is the periplasm. It carries out the reaction 2 Fe(II)-[cytochrome] + nitrate + 2 H(+) = 2 Fe(III)-[cytochrome] + nitrite + H2O. Its function is as follows. Catalytic subunit of the periplasmic nitrate reductase complex NapAB. Receives electrons from NapB and catalyzes the reduction of nitrate to nitrite. This Escherichia coli O8 (strain IAI1) protein is Periplasmic nitrate reductase.